Reading from the N-terminus, the 325-residue chain is Glutarate 2-hydroxylase (325 aa).

3 residues coordinate Fe cation: H160, D162, and H292.

Belongs to the glutarate hydroxylase family. In terms of assembly, homotetramer. The cofactor is Fe(2+).

It catalyses the reaction glutarate + 2-oxoglutarate + O2 = (S)-2-hydroxyglutarate + succinate + CO2. Its pathway is amino-acid degradation. Acts as an alpha-ketoglutarate-dependent dioxygenase catalyzing hydroxylation of glutarate (GA) to L-2-hydroxyglutarate (L2HG). Functions in a L-lysine degradation pathway that proceeds via cadaverine, glutarate and L-2-hydroxyglutarate. The protein is Glutarate 2-hydroxylase of Escherichia coli O7:K1 (strain IAI39 / ExPEC).